The sequence spans 115 residues: DNA-binding protein PH1060 (115 aa).

This sequence belongs to the PDCD5 family.

This Pyrococcus horikoshii (strain ATCC 700860 / DSM 12428 / JCM 9974 / NBRC 100139 / OT-3) protein is DNA-binding protein PH1060.